A 282-amino-acid chain; its full sequence is Adenosylcobinamide-GDP ribazoletransferase (282 aa).

6 helical membrane passes run 47-67 (GVGILVGVMAALVYGLIQALL), 72-92 (FTPLVAAVLSTAATVLLTGGF), 124-144 (AFGAMALMLALLGKTALLAML), 167-187 (AALLTGHVVSRGLPLLLIWLL), 208-228 (GSLLVAFIWSFVVLALAGLAL), and 231-251 (ISLIVACSFSLLALLWMGALF).

Belongs to the CobS family. Mg(2+) is required as a cofactor.

The protein localises to the cell inner membrane. It carries out the reaction alpha-ribazole + adenosylcob(III)inamide-GDP = adenosylcob(III)alamin + GMP + H(+). The catalysed reaction is alpha-ribazole 5'-phosphate + adenosylcob(III)inamide-GDP = adenosylcob(III)alamin 5'-phosphate + GMP + H(+). The protein operates within cofactor biosynthesis; adenosylcobalamin biosynthesis; adenosylcobalamin from cob(II)yrinate a,c-diamide: step 7/7. Its function is as follows. Joins adenosylcobinamide-GDP and alpha-ribazole to generate adenosylcobalamin (Ado-cobalamin). Also synthesizes adenosylcobalamin 5'-phosphate from adenosylcobinamide-GDP and alpha-ribazole 5'-phosphate. The sequence is that of Adenosylcobinamide-GDP ribazoletransferase from Polaromonas sp. (strain JS666 / ATCC BAA-500).